A 275-amino-acid polypeptide reads, in one-letter code: Large ribosomal subunit protein uL2 (275 aa).

Residues 224 to 251 (VMNPVDHPHGGGEGRSPIGRKAPVTPWG) form a disordered region.

This sequence belongs to the universal ribosomal protein uL2 family. Part of the 50S ribosomal subunit. Forms a bridge to the 30S subunit in the 70S ribosome.

One of the primary rRNA binding proteins. Required for association of the 30S and 50S subunits to form the 70S ribosome, for tRNA binding and peptide bond formation. It has been suggested to have peptidyltransferase activity; this is somewhat controversial. Makes several contacts with the 16S rRNA in the 70S ribosome. This Heliobacterium modesticaldum (strain ATCC 51547 / Ice1) protein is Large ribosomal subunit protein uL2.